The sequence spans 1382 residues: ATP-dependent RNA helicase TDRD9 (1382 aa).

The tract at residues 36-62 (AAREEVQRQDVAPGAGPAAQAPALAQA) is disordered. Low complexity predominate over residues 47-62 (APGAGPAAQAPALAQA). Positions 142 to 308 (VSLIESNSVV…FAVPVQNKMN (167 aa)) constitute a Helicase ATP-binding domain. ATP is bound at residue 155–162 (GATGSGKS). The short motif at 254–257 (DEVH) is the DEAH box element. The Helicase C-terminal domain maps to 377–544 (SGAQFVLERS…ILKVKLLDMG (168 aa)). The 61-residue stretch at 944–1004 (HPHPDLVCLA…MEIPCQFLEL (61 aa)) folds into the Tudor domain.

It belongs to the DEAD box helicase family. DEAH subfamily. Interacts with piRNA-associated proteins PIWIL1 and PIWIL4.

The protein resides in the cytoplasm. It is found in the nucleus. It catalyses the reaction ATP + H2O = ADP + phosphate + H(+). Functionally, ATP-binding RNA helicase required during spermatogenesis. Required to repress transposable elements and prevent their mobilization, which is essential for the germline integrity. Acts via the piRNA metabolic process, which mediates the repression of transposable elements during meiosis by forming complexes composed of piRNAs and Piwi proteins and governs the methylation and subsequent repression of transposons. Acts downstream of piRNA biogenesis: exclusively required for transposon silencing in the nucleus, suggesting that it acts as a nuclear effector in the nucleus together with PIWIL4. This chain is ATP-dependent RNA helicase TDRD9, found in Homo sapiens (Human).